Consider the following 578-residue polypeptide: Ketol-acid reductoisomerase, chloroplastic (578 aa).

The N-terminal 52 residues, 1–52 (MAASTTLALSHPKTLAAAAAAAPKAPTAPAAVSFPVSHAACAPLAARRRAVT), are a transit peptide targeting the chloroplast. The KARI N-terminal Rossmann domain occupies 90–288 (VRGGRNLFPL…ALGSPFTFAT (199 aa)). NADP(+) contacts are provided by residues 111-118 (GVIGWGSQ), 144-149 (RKGSKS), and 183-187 (SDAAQ). Histidine 208 is an active-site residue. KARI C-terminal knotted domains follow at residues 289–437 (TLEQ…RPEN) and 438–574 (DLGP…RPEL). 4 residues coordinate Mg(2+): aspartate 297, glutamate 301, glutamate 474, and glutamate 478. Serine 500 contacts substrate.

It belongs to the ketol-acid reductoisomerase family. As to quaternary structure, homodimer. Mg(2+) is required as a cofactor.

The protein localises to the plastid. Its subcellular location is the chloroplast. The enzyme catalyses (2R)-2,3-dihydroxy-3-methylbutanoate + NADP(+) = (2S)-2-acetolactate + NADPH + H(+). The catalysed reaction is (2R,3R)-2,3-dihydroxy-3-methylpentanoate + NADP(+) = (S)-2-ethyl-2-hydroxy-3-oxobutanoate + NADPH + H(+). Its pathway is amino-acid biosynthesis; L-isoleucine biosynthesis; L-isoleucine from 2-oxobutanoate: step 2/4. It functions in the pathway amino-acid biosynthesis; L-valine biosynthesis; L-valine from pyruvate: step 2/4. The chain is Ketol-acid reductoisomerase, chloroplastic from Oryza sativa subsp. japonica (Rice).